Here is a 72-residue protein sequence, read N- to C-terminus: Translation initiation factor IF-1 (72 aa).

The S1-like domain occupies M1 to R72.

Belongs to the IF-1 family. Component of the 30S ribosomal translation pre-initiation complex which assembles on the 30S ribosome in the order IF-2 and IF-3, IF-1 and N-formylmethionyl-tRNA(fMet); mRNA recruitment can occur at any time during PIC assembly.

The protein resides in the cytoplasm. Its function is as follows. One of the essential components for the initiation of protein synthesis. Stabilizes the binding of IF-2 and IF-3 on the 30S subunit to which N-formylmethionyl-tRNA(fMet) subsequently binds. Helps modulate mRNA selection, yielding the 30S pre-initiation complex (PIC). Upon addition of the 50S ribosomal subunit IF-1, IF-2 and IF-3 are released leaving the mature 70S translation initiation complex. The sequence is that of Translation initiation factor IF-1 from Actinobacillus pleuropneumoniae serotype 5b (strain L20).